Here is a 385-residue protein sequence, read N- to C-terminus: Glucans biosynthesis protein C (385 aa).

Helical transmembrane passes span 17–37, 60–80, 91–111, 137–157, 173–193, 212–232, 239–259, 274–294, 311–331, and 338–358; these read AWLM…SHTW, MQVF…RYPL, VGIP…IMLQ, ISHL…VWIF, KFSM…YAVI, FIVM…LAFI, LFTT…VAYL, TESV…FSFG, ASLF…AYIT, and WLGF…LYEI.

Belongs to the acyltransferase 3 family. OpgC subfamily.

The protein resides in the cell membrane. It participates in glycan metabolism; osmoregulated periplasmic glucan (OPG) biosynthesis. Its function is as follows. Necessary for the succinyl substitution of periplasmic glucans. Could catalyze the transfer of succinyl residues from the cytoplasmic side of the membrane to the nascent glucan backbones on the periplasmic side of the membrane. This is Glucans biosynthesis protein C from Shigella dysenteriae serotype 1 (strain Sd197).